A 192-amino-acid chain; its full sequence is MITISDAAQAHFVKLLADQPEGTHIRVFVISPGTPSAECGVSYCPPDAVEADDIELEFNGFHAMVDEKSAPFLEDASIDFVTDQLGSQLTLKAPNAKMRKVDADAPLKERIEYVIQSEINPQLASHGGNIMLVDIDEAGIAILQFGGGCNGCSMVDVTLKDGIEKQLLDMFPGELTGVRDVTEHQHGEHSYQ.

[4Fe-4S] cluster-binding residues include Cys149 and Cys152.

The protein belongs to the NfuA family. Homodimer. [4Fe-4S] cluster is required as a cofactor.

In terms of biological role, involved in iron-sulfur cluster biogenesis. Binds a 4Fe-4S cluster, can transfer this cluster to apoproteins, and thereby intervenes in the maturation of Fe/S proteins. Could also act as a scaffold/chaperone for damaged Fe/S proteins. The polypeptide is Fe/S biogenesis protein NfuA (Shewanella loihica (strain ATCC BAA-1088 / PV-4)).